The sequence spans 590 residues: Ras-specific guanine nucleotide-releasing factor RalGPS2 (590 aa).

The region spanning 49 to 287 is the Ras-GEF domain; it reads TPEEYAGQIT…YKLSLKIEPG (239 aa). The disordered stretch occupies residues 288-319; it reads ASTPRSAASREDLAGPDIGASPQGGRKSSAAA. Phosphoserine occurs at positions 293, 296, and 308. A PXXP motif is present at residues 331–334; it reads PQTP. Position 333 is a phosphothreonine (Thr-333). Phosphoserine is present on residues Ser-336 and Ser-350. A Phosphothreonine modification is found at Thr-368. Residues 380–413 form a disordered region; it reads DSVMEPHAPSRGQAESSTLSSGISIGSSDGSELS. Phosphoserine is present on Ser-381. Over residues 394–410 the composition is skewed to low complexity; the sequence is ESSTLSSGISIGSSDGS. A Phosphoserine modification is found at Ser-429. A PH domain is found at 464–576; that stretch reads AVTIQGVLRR…WFKHLSAACQ (113 aa). The segment at 466 to 590 is required for stimulation of nucleotide exchange by RALA; that stretch reads TIQGVLRRKT…QVPTNLMTFE (125 aa).

Interacts with RALA. Interacts with the SH3 domains of GRB2 and PLCG1. Abundant in brain and testis.

It localises to the cytoplasm. The protein localises to the cell membrane. Guanine nucleotide exchange factor for the small GTPase RALA. May be involved in cytoskeletal organization. May also be involved in the stimulation of transcription in a Ras-independent fashion. The chain is Ras-specific guanine nucleotide-releasing factor RalGPS2 (Ralgps2) from Mus musculus (Mouse).